Consider the following 227-residue polypeptide: Staphylococcal superantigen-like 10 (227 aa).

Positions 1 to 30 (MKFTALAKATLALGILTTGTLTTEVHSGHA) are cleaved as a signal peptide.

It belongs to the staphylococcal/streptococcal toxin family. As to quaternary structure, interacts with prothrombin/F2 and coagulation factor X/F12. Interacts with human CXCR4.

The protein resides in the secreted. Plays a role in the inhibition of host complement activation via the classical pathway by interacting with the Fc region of human IgG and thereby interfering with the IgG/C1q interaction. Also inhibits the penultimate step of plasma clotting by interacting with prothrombin/F2 and coagulation factor X/F12. Does not affect the protease activity of thrombin but interferes with the conversion of prothrombin to thrombin. Interacts with human receptor CXCR4 and specifically inhibits CXCL12-induced calcium mobilization and cell migration. The chain is Staphylococcal superantigen-like 10 from Staphylococcus aureus (strain NCTC 8325 / PS 47).